Reading from the N-terminus, the 116-residue chain is Protein Rev (116 aa).

S5 and S8 each carry phosphoserine; by host CK2. Residues 18–26 (IIKILYQSN) are homomultimerization. Residues 34–50 (TRQARRNRRRRWRARQR) carry the Nuclear localization signal and RNA-binding (RRE) motif. Positions 73–84 (LQLPPLERLTLN) match the Nuclear export signal and binding to XPO1 motif. Positions 87 to 116 (EDCGTSGEKGEGSPQISLESSTILGTGTKE) are disordered. S92 and S99 each carry phosphoserine; by host. Polar residues predominate over residues 100-116 (PQISLESSTILGTGTKE).

This sequence belongs to the HIV-1 REV protein family. As to quaternary structure, homomultimer; when bound to the RRE. Multimeric assembly is essential for activity and may involve XPO1. Binds to human KPNB1, XPO1, TNPO1, RANBP5 and IPO7. Interacts with the viral Integrase. Interacts with human KHDRBS1. Interacts with human NAP1; this interaction decreases Rev multimerization and stimulates its activity. Interacts with human DEAD-box helicases DDX3 and DDX24; these interactions may serve for viral RNA export to the cytoplasm and packaging, respectively. Interacts with human PSIP1; this interaction may inhibit HIV-1 DNA integration by promoting dissociation of the Integrase-LEDGF/p75 complex. Asymmetrically arginine dimethylated at one site by host PRMT6. Methylation impairs the RNA-binding activity and export of viral RNA from the nucleus to the cytoplasm. Post-translationally, phosphorylated by protein kinase CK2. Presence of, and maybe binding to the N-terminus of the regulatory beta subunit of CK2 is necessary for CK2-mediated Rev's phosphorylation.

The protein localises to the host nucleus. It is found in the host nucleolus. The protein resides in the host cytoplasm. Functionally, escorts unspliced or incompletely spliced viral pre-mRNAs (late transcripts) out of the nucleus of infected cells. These pre-mRNAs carry a recognition sequence called Rev responsive element (RRE) located in the env gene, that is not present in fully spliced viral mRNAs (early transcripts). This function is essential since most viral proteins are translated from unspliced or partially spliced pre-mRNAs which cannot exit the nucleus by the pathway used by fully processed cellular mRNAs. Rev itself is translated from a fully spliced mRNA that readily exits the nucleus. Rev's nuclear localization signal (NLS) binds directly to KPNB1/Importin beta-1 without previous binding to KPNA1/Importin alpha-1. KPNB1 binds to the GDP bound form of RAN (Ran-GDP) and targets Rev to the nucleus. In the nucleus, the conversion from Ran-GDP to Ran-GTP dissociates Rev from KPNB1 and allows Rev's binding to the RRE in viral pre-mRNAs. Rev multimerization on the RRE via cooperative assembly exposes its nuclear export signal (NES) to the surface. Rev can then form a complex with XPO1/CRM1 and Ran-GTP, leading to nuclear export of the complex. Conversion from Ran-GTP to Ran-GDP mediates dissociation of the Rev/RRE/XPO1/RAN complex, so that Rev can return to the nucleus for a subsequent round of export. Beside KPNB1, also seems to interact with TNPO1/Transportin-1, RANBP5/IPO5 and IPO7/RANBP7 for nuclear import. The nucleoporin-like HRB/RIP is an essential cofactor that probably indirectly interacts with Rev to release HIV RNAs from the perinuclear region to the cytoplasm. In Human immunodeficiency virus type 1 group M subtype H (isolate 90CF056) (HIV-1), this protein is Protein Rev.